The primary structure comprises 428 residues: 3-phosphoshikimate 1-carboxyvinyltransferase (428 aa).

The 3-phosphoshikimate site is built by K22, S23, and R27. K22 provides a ligand contact to phosphoenolpyruvate. 2 residues coordinate phosphoenolpyruvate: G96 and R124. Positions 170, 171, 172, 198, 314, 337, and 341 each coordinate 3-phosphoshikimate. Residue Q172 coordinates phosphoenolpyruvate. The active-site Proton acceptor is D314. Phosphoenolpyruvate contacts are provided by R345, R387, and K412.

It belongs to the EPSP synthase family. Monomer.

Its subcellular location is the cytoplasm. The catalysed reaction is 3-phosphoshikimate + phosphoenolpyruvate = 5-O-(1-carboxyvinyl)-3-phosphoshikimate + phosphate. It functions in the pathway metabolic intermediate biosynthesis; chorismate biosynthesis; chorismate from D-erythrose 4-phosphate and phosphoenolpyruvate: step 6/7. Its function is as follows. Catalyzes the transfer of the enolpyruvyl moiety of phosphoenolpyruvate (PEP) to the 5-hydroxyl of shikimate-3-phosphate (S3P) to produce enolpyruvyl shikimate-3-phosphate and inorganic phosphate. The chain is 3-phosphoshikimate 1-carboxyvinyltransferase from Photobacterium profundum (strain SS9).